Reading from the N-terminus, the 454-residue chain is Bleomycin hydrolase (454 aa).

Position 1 is an N-acetylmethionine (methionine 1). Residues cysteine 73 and histidine 372 contribute to the active site. An N6-acetyllysine modification is found at lysine 391. The active site involves asparagine 396.

This sequence belongs to the peptidase C1 family. As to quaternary structure, homohexamer. Interacts with NUDT12 (via ANK repeats). As to expression, expressed at relatively higher levels in the stomach, esophagus, spleen, thymus and testis, and at lower levels in the skin, lung and skeletal muscle.

Its subcellular location is the cytoplasm. The protein resides in the cytoplasmic granule. The enzyme catalyses Inactivates bleomycin B2 (a cytotoxic glycometallopeptide) by hydrolysis of a carboxyamide bond of beta-aminoalanine, but also shows general aminopeptidase activity. The specificity varies somewhat with source, but amino acid arylamides of Met, Leu and Ala are preferred.. Its function is as follows. The normal physiological role of BLM hydrolase is unknown, but it catalyzes the inactivation of the antitumor drug BLM (a glycopeptide) by hydrolyzing the carboxamide bond of its B-aminoalaninamide moiety thus protecting normal and malignant cells from BLM toxicity. Binds single-stranded DNA with higher affinity than double-stranded DNA. May play an important role in the metabolism of antibiotics. This is Bleomycin hydrolase (Blmh) from Rattus norvegicus (Rat).